Here is a 479-residue protein sequence, read N- to C-terminus: PRAME family member 19 (479 aa).

Residues 15-38 (QSLLRDQALAISVLDELPRELFPR) form an LRR 1 repeat. The stretch at 97–124 (RWKLQVLEMRDVDENFWTIWSGARPLSC) is one LRR 1; degenerate repeat. Residues 179 to 203 (HLCCTKVVNYSMNILNFRNILETVY) form an LRR 2; degenerate repeat. One copy of the LRR 3; degenerate repeat lies at 204-230 (PDSIQVLEIWNMCWPCMVAEVSRYLSQ). Residues 231–265 (MKNLRKLFISDGCGYLPSFESQGQLVAEFSSVFLR) form an LRR 4; degenerate repeat. 5 LRR repeats span residues 266–291 (LEYL…IRCL), 292–323 (KSPL…SQLK), 324–342 (QLNL…PLRA), 348–375 (AATL…ALSR), and 376–400 (CSNL…LLRH).

The protein belongs to the PRAME family.

The polypeptide is PRAME family member 19 (Homo sapiens (Human)).